Consider the following 523-residue polypeptide: FAD-dependent monooxygenase drtC (523 aa).

The region spanning Thr-77–Gln-252 is the FAD-binding PCMH-type domain.

The protein belongs to the oxygen-dependent FAD-linked oxidoreductase family. Requires FAD as cofactor.

The protein operates within secondary metabolite biosynthesis; terpenoid biosynthesis. Functionally, FAD-dependent monooxygenase; part of the gene cluster that mediates the biosynthesis of various drimane-type sesquiterpene esters, compounds that exhibit diverse biological activities and are widely present in eukaryotes. The pathway begins with the synthesis of the backbone drimenol by the terpene cyclase drtB using farnesyl pyrophosphate (FPP) as substrate. The cytochrome P450 monooxygenase drtD is then responsible for the hydroxylations at C-6, C-9 and C-12, as well as the oxidation of hydroxyl groups at C-6 and C-11 to a ketone and an aldehyde, respectively. Then, the biosynthesis can go in two directions, either the hydroxylated drimenol is further hydroxylated at C-2 and C-3 by an enzyme(s) not associated with the drt cluster, or the FAD-binding oxidoreductase drtC further oxidizes C-11 or C-12 to form the butyrolactone ring. DrtB, drtD and drtC are solely responsible for the formation of the different drimane structures observed during drimane sesquiterpenes biosynthesis. The polyketide synthase drtA synthesizes different lengths (C6 and C8) of PKS chains, which are then oxidized to varying degrees by the short-chain dehydrogenase drtF. Finally, these PKS chains are transferred onto drimane sesquiterpenes by the acyltransferase drtE, forming the sesquiterpene esters. In addition to the different fatty acyl-CoA chains produced by drtA, drtE is also able to use cinnamoyl-CoA as a substrate. This Aspergillus calidoustus protein is FAD-dependent monooxygenase drtC.